We begin with the raw amino-acid sequence, 341 residues long: Protein FAM50A (341 aa).

2 disordered regions span residues 1 to 27 (MAQY…EREQ) and 80 to 147 (LVKE…EIEE). Residues 80 to 115 (LVKEREKQLAKKEQSKELQLKLEKQKEKKRKEEQKR) show a composition bias toward basic and acidic residues. Over residues 125 to 147 (DEGEDEEEEEEEEEEEEEDEIEE) the composition is skewed to acidic residues.

The protein belongs to the FAM50 family.

The protein localises to the nucleus. Functionally, probably involved in the regulation of pre-mRNA splicing. This chain is Protein FAM50A (fam50a), found in Danio rerio (Zebrafish).